A 627-amino-acid chain; its full sequence is Neuronal acetylcholine receptor subunit alpha-4 (627 aa).

Residues 1–28 form the signal peptide; the sequence is MELGGPGAPRLLPPLLLLLGTGLLRASS. The Extracellular segment spans residues 29–242; it reads HVETRAHAEE…ITYAFVIRRL (214 aa). The N-linked (GlcNAc...) asparagine glycan is linked to asparagine 57. Residues valine 76 and glutamate 78 each contribute to the Ca(2+) site. Residues asparagine 107 and asparagine 174 are each glycosylated (N-linked (GlcNAc...) asparagine). Disulfide bonds link cysteine 161-cysteine 175 and cysteine 225-cysteine 226. A helical membrane pass occupies residues 243 to 267; sequence PLFYTINLIIPCLLISCLTVLVFYL. The S-palmitoyl cysteine moiety is linked to residue cysteine 271. 2 consecutive transmembrane segments (helical) span residues 275–293 and 309–330; these read ITLCISVLLSLTVFLLLIT and YLLFTMIFVTLSIVITVFVLNV. At 331–600 the chain is on the cytoplasmic side; that stretch reads HHRSPRTHTM…WKYVAMVIDR (270 aa). Disordered regions lie at residues 382–479 and 497–559; these read PRFW…EAVE and DATS…RHLP. A phosphoserine mark is found at serine 424, serine 538, and serine 541. The helical transmembrane segment at 601–619 threads the bilayer; it reads IFLWMFIIVCLLGTVGLFL.

Belongs to the ligand-gated ion channel (TC 1.A.9) family. Acetylcholine receptor (TC 1.A.9.1) subfamily. Alpha-4/CHRNA4 sub-subfamily. In terms of assembly, neuronal AChR is composed of two different types of subunits: alpha and beta. CHRNA4 forms heteropentameric neuronal acetylcholine receptors with CHRNB2 and CHRNB4, as well as CHRNA5 and CHRNB3 as accesory subunits. Found in two major stoichiometric forms, LS (low agonist sensitivity): (CHRNA4)3:(CHRNB2)2 and HS (high agonist sensitivity): (CHRNA4)2:(CHRNB2)3, the two stoichiometric forms differ in their unitary conductance, calcium permeability, ACh sensitivity and potentiation by divalent cation. Cells produce predominantly an (CHRNA4)3:(CHRNB2)2 nAChR. The (CHRNA4)2:(CHRNB2)3 expression is selectively up-regulated by nicotine and has lower single channel conductance and calcium permeability. In the striatum, also forms CHRNA4:CHRNA6:CHRNB2 complexes. Also found in the stoichiometric form: (CHRNA4:CHRNB2)2:CHRNB3. Interacts with RIC3; which is required for proper folding and assembly. Interacts with LYPD6.

The protein resides in the synaptic cell membrane. It is found in the cell membrane. It catalyses the reaction Ca(2+)(in) = Ca(2+)(out). The enzyme catalyses K(+)(in) = K(+)(out). The catalysed reaction is Na(+)(in) = Na(+)(out). Its activity is regulated as follows. Activated by a myriad of ligands such as acetylcholine, cytisine, nicotine, choline and epibatidine. Channel potentiation by calcium is stoichiometry-selective, CHRNA4:CHRNB2 nACh receptor is achieved by calcium association with topographically distinct sites framed by anionic residues within the CHRNA4 subunit and between the CHRNA4 and CHRNB2 subunits. nAChR activity is inhibited by the antagonist alpha-conotoxins BuIA, PnIA, GID and MII, small disulfide-constrained peptides from cone snails. Component of neuronal acetylcholine receptors (nAChRs) that function as pentameric, ligand-gated cation channels with high calcium permeability among other activities. nAChRs are excitatory neurotrasnmitter receptors formed by a collection of nAChR subunits known to mediate synaptic transmission in the nervous system and the neuromuscular junction. Each nAchR subunit confers differential attributes to channel properties, including activation, deactivation and desensitization kinetics, pH sensitivity, cation permeability, and binding to allosteric modulators. CHRNA4 forms heteropentameric neuronal acetylcholine receptors with CHRNB2 and CHRNB4, as well as CHRNA5 and CHRNB3 as accesory subunits. Is the most abundant nAChR subtype expressed in the central nervous system. Found in two major stoichiometric forms,(CHRNA4)3:(CHRNB2)2 and (CHRNA4)2:(CHRNB2)3, the two stoichiometric forms differ in their unitary conductance, calcium permeability, ACh sensitivity and potentiation by divalent cation. Involved in the modulation of calcium-dependent signaling pathways, influences the release of neurotransmitters, including dopamine, glutamate and GABA. This is Neuronal acetylcholine receptor subunit alpha-4 (CHRNA4) from Pan troglodytes (Chimpanzee).